The sequence spans 221 residues: Riboflavin kinase (221 aa).

An H-T-H motif-like region spans residues 1 to 92 (MVTPEDLECL…YRLFGRQEKS (92 aa)). The tract at residues 93–221 (LMLNGTVQSG…GDEVTIEVTL (129 aa)) is riboflavin kinase. 102-107 (GLGEGA) serves as a coordination point for CDP. 2 residues coordinate Mg(2+): Thr-131 and Asn-133. Residues Thr-188 and Glu-196 each contribute to the FMN site. A CDP-binding site is contributed by 201–204 (EGLR).

It belongs to the archaeal riboflavin kinase family. The cofactor is Mg(2+).

It carries out the reaction riboflavin + CTP = CDP + FMN + H(+). It participates in cofactor biosynthesis; FMN biosynthesis; FMN from riboflavin (CTP route): step 1/1. Functionally, catalyzes the CTP-dependent phosphorylation of riboflavin (vitamin B2) to form flavin mononucleotide (FMN). This chain is Riboflavin kinase (ribK), found in Methanospirillum hungatei JF-1 (strain ATCC 27890 / DSM 864 / NBRC 100397 / JF-1).